We begin with the raw amino-acid sequence, 610 residues long: Synaptotagmin-like protein 3 (610 aa).

Residues E4 to E123 form the RabBD domain. A disordered region spans residues R219–T239. 2 C2 domains span residues V306–F428 and R462–T603.

As to quaternary structure, monomer. Binds NRXN1. Binds RAB27A that has been activated by GTP-binding via its N-terminus.

The protein resides in the endomembrane system. Functionally, may act as Rab effector protein and play a role in vesicle trafficking. Binds phospholipids in the presence of calcium ions. The polypeptide is Synaptotagmin-like protein 3 (SYTL3) (Homo sapiens (Human)).